The chain runs to 347 residues: DNA-directed RNA polymerase subunit alpha (347 aa).

Residues 1-226 are alpha N-terminal domain (alpha-NTD); sequence MLISQRPTLS…ELFGLARELN (226 aa). Residues 241–347 are alpha C-terminal domain (alpha-CTD); that stretch reads ADHIASFALP…DQDYAETEQL (107 aa).

Belongs to the RNA polymerase alpha chain family. In terms of assembly, homodimer. The RNAP catalytic core consists of 2 alpha, 1 beta, 1 beta' and 1 omega subunit. When a sigma factor is associated with the core the holoenzyme is formed, which can initiate transcription.

It carries out the reaction RNA(n) + a ribonucleoside 5'-triphosphate = RNA(n+1) + diphosphate. DNA-dependent RNA polymerase catalyzes the transcription of DNA into RNA using the four ribonucleoside triphosphates as substrates. The sequence is that of DNA-directed RNA polymerase subunit alpha from Mycobacterium ulcerans (strain Agy99).